The chain runs to 93 residues: Probable Fe(2+)-trafficking protein (93 aa).

The protein belongs to the Fe(2+)-trafficking protein family.

Its function is as follows. Could be a mediator in iron transactions between iron acquisition and iron-requiring processes, such as synthesis and/or repair of Fe-S clusters in biosynthetic enzymes. The sequence is that of Probable Fe(2+)-trafficking protein from Acidithiobacillus ferrooxidans (strain ATCC 23270 / DSM 14882 / CIP 104768 / NCIMB 8455) (Ferrobacillus ferrooxidans (strain ATCC 23270)).